Consider the following 379-residue polypeptide: DNA replication and repair protein RecF (379 aa).

Gly-30–Ser-37 lines the ATP pocket.

The protein belongs to the RecF family.

Its subcellular location is the cytoplasm. Its function is as follows. The RecF protein is involved in DNA metabolism; it is required for DNA replication and normal SOS inducibility. RecF binds preferentially to single-stranded, linear DNA. It also seems to bind ATP. This is DNA replication and repair protein RecF from Thermosynechococcus vestitus (strain NIES-2133 / IAM M-273 / BP-1).